The sequence spans 837 residues: Endo-1,4-beta-xylanase Z (837 aa).

An N-terminal signal peptide occupies residues 1 to 28 (MSRKLFSVLLVGLMLMTSLLVTISSTSA). A CBM6 domain is found at 299–420 (TRIEAEDYDG…PVNIDWFTFG (122 aa)). Positions 424-492 (SSTGLGDLNG…ILRIITEFPG (69 aa)) constitute a Dockerin domain. Positions 512–833 (TISGNALRDY…KPAYNAIKEA (322 aa)) constitute a GH10 domain. The active-site Proton donor is glutamate 645. Catalysis depends on glutamate 754, which acts as the Nucleophile. Residues cysteine 783 and cysteine 789 are joined by a disulfide bond.

The protein belongs to the glycosyl hydrolase 10 (cellulase F) family.

The catalysed reaction is Endohydrolysis of (1-&gt;4)-beta-D-xylosidic linkages in xylans.. The polypeptide is Endo-1,4-beta-xylanase Z (xynZ) (Acetivibrio thermocellus (strain ATCC 27405 / DSM 1237 / JCM 9322 / NBRC 103400 / NCIMB 10682 / NRRL B-4536 / VPI 7372) (Clostridium thermocellum)).